Here is a 552-residue protein sequence, read N- to C-terminus: MSETETRPTNFIRQIIDEDLKSGKHSSVHTRFPPEPNGYLHIGHAKSICLNFGIAQDYQGQCNLRFDDTNPEKEDIEYVESIKNDVNWLGFQWSGDIQYSSNYFDKLYGYAVELIEKGLAYVDELTPEQMREYRGSLKEPGKNSPYRDRSVEENLALFEQMRDGKFKEGTICLRAKIDMASSFIVLRDPVIYRVRFATHHQTGDKWCIYPMYDFTHCISDALEGITHSICTLEFQDNRRLYDWVLENITIDCQPRQYEFSRLNLEYTVMSKRKLNQLVTEKLVNGWDDPRMPTVSGLRRRGFTSASIREFCKRIGVTKQENMIEFSSLESCIRDDLNESAPRAMAVLEPVKLVIENYEEGKVETLNIANHPNKPEMGTREVPFTREVYIEQDDFREEANKKYKRLVLGKEVRLRGAYVIQANRIEKDEAGNITTIFCSYDEDTLGKNPADGRKVKGVIHWVSADKALPAEIRLYDRLFTVPNPGAADDFAATINPESLVVKNGFVEPSLATAEAEVGYQFERTGYFCADNKDSSADALVFNRTVGLRDTWAG.

Residues 34 to 44 carry the 'HIGH' region motif; sequence PEPNGYLHIGH. ATP is bound by residues 35-37 and 41-47; these read EPN and HIGHAKS. Positions 67 and 212 each coordinate L-glutamine. ATP is bound by residues Thr231, 261 to 262, and 269 to 271; these read RL and MSK. The short motif at 268–272 is the 'KMSKS' region element; the sequence is VMSKR.

The protein belongs to the class-I aminoacyl-tRNA synthetase family. Monomer.

Its subcellular location is the cytoplasm. The enzyme catalyses tRNA(Gln) + L-glutamine + ATP = L-glutaminyl-tRNA(Gln) + AMP + diphosphate. The polypeptide is Glutamine--tRNA ligase (Aliivibrio fischeri (strain MJ11) (Vibrio fischeri)).